We begin with the raw amino-acid sequence, 1069 residues long: Rab GTPase-activating protein 1 (1069 aa).

The segment at 1–79 (MDDKASVGKI…DPPMDDQPGE (79 aa)) is disordered. Over residues 7–22 (VGKISVSSDSVSTLNS) the composition is skewed to low complexity. Position 42 is a phosphoserine (serine 42). The region spanning 142 to 298 (EDSVVFSKLT…IFTFSVSLEI (157 aa)) is the PID domain. At serine 360 the chain carries Phosphoserine. Positions 482 to 527 (ERERRKTTASPSVRLPQSGSQSSVIPSPPEDDEEEDNDEPLLSGSG) are disordered. The span at 489–506 (TASPSVRLPQSGSQSSVI) shows a compositional bias: polar residues. The segment covering 510–520 (PEDDEEEDNDE) has biased composition (acidic residues). One can recognise a Rab-GAP TBC domain in the interval 566-752 (GVPEALRGEV…HIIDLLLCEG (187 aa)). A coiled-coil region spans residues 798–1047 (KKLMELACNM…ALNEVQAAKK (250 aa)). Threonine 996 is subject to Phosphothreonine.

Interacts with RAB6A and tubulin gamma.

The protein resides in the cytoplasm. It is found in the cytosol. Its subcellular location is the cytoskeleton. The protein localises to the microtubule organizing center. It localises to the centrosome. Functionally, may act as a GTPase-activating protein of RAB6A. May play a role in microtubule nucleation by centrosome. May participate in a RAB6A-mediated pathway involved in the metaphase-anaphase transition. This chain is Rab GTPase-activating protein 1, found in Pongo abelii (Sumatran orangutan).